We begin with the raw amino-acid sequence, 429 residues long: D-amino acid dehydrogenase (429 aa).

An FAD-binding site is contributed by 3–17 (VLILGSGVIGVTSAW).

This sequence belongs to the DadA oxidoreductase family. Requires FAD as cofactor.

It carries out the reaction a D-alpha-amino acid + A + H2O = a 2-oxocarboxylate + AH2 + NH4(+). Oxidative deamination of D-amino acids. In Xanthomonas axonopodis pv. citri (strain 306), this protein is D-amino acid dehydrogenase.